A 93-amino-acid polypeptide reads, in one-letter code: uncharacterized protein (93 aa).

The chain crosses the membrane as a helical span at residues 20–40; the sequence is VYIYLCFSLMTIALICYLIHI. The N-linked (GlcNAc...) asparagine; by host glycan is linked to asparagine 78.

The protein belongs to the asfivirus KP93L family.

It is found in the host membrane. This is an uncharacterized protein from Ornithodoros (relapsing fever ticks).